The following is a 31-amino-acid chain: Potassium channel toxin alpha-KTx 5.1 (31 aa).

3 disulfide bridges follow: C3–C21, C8–C26, and C12–C28. Residues 6 to 9 form a [R/K]XCQ motif region; the sequence is RMCQ. H31 carries the histidine amide modification.

This sequence belongs to the short scorpion toxin superfamily. Potassium channel inhibitor family. Alpha-KTx 05 subfamily. Post-translationally, two disulfide bonds are the minimal requirement needed to produce a nativelike and bio-active conformation in this toxin. The third disulfide provides an additional contribution to structure stabilization and can modulate biological potency depending on its position and the structural regions involved in biological activity. Expressed by the venom gland.

It is found in the secreted. Its function is as follows. Blocker for the small conductance calcium-activated potassium channels. Shows the best affinity for KCa2.2/KCNN2 (Kd=0.2 nM), followed by KCa2.3/KCNN3 (Kd=1.1 nM) and KCa2.1/KCNN1 (Kd=325 nM). In Leiurus hebraeus (Hebrew deathstalker scorpion), this protein is Potassium channel toxin alpha-KTx 5.1.